We begin with the raw amino-acid sequence, 356 residues long: MSGKTKRLMVMAGGTGGHVFPGLAVAHHLMAQGWQVRWLGTADRMEASLVPQHGIEIDFIKISGLRGKGLMAQLTAPIRIYRAVRQAQKIMRDYQPNVVLGMGGYVSGPGGLAAWLCGVPVVLHEQNGIAGLTNRWLARIAKKVLQAFPGAFPNADVVGNPVRTDVLALPLPAVRLSGREGPIRVLVIGGSQGARILNQTLPLVAASLGEQITLWHQVGKGALPEVSQAYQQAGQAGHLVVEFIDDMAAAYAWADVVVCRSGALTVSEVAAAGLPAIFVPFQHKDRQQYWNALPLEKAGAAKIIEQPQFTATSVSSLLASWDRATLLSMAERARSVAIPDATERVAAEVVAASKSA.

UDP-N-acetyl-alpha-D-glucosamine-binding positions include T15 to G17, N127, R163, S191, I244, A263 to E268, and Q288.

This sequence belongs to the glycosyltransferase 28 family. MurG subfamily.

Its subcellular location is the cell inner membrane. The catalysed reaction is di-trans,octa-cis-undecaprenyl diphospho-N-acetyl-alpha-D-muramoyl-L-alanyl-D-glutamyl-meso-2,6-diaminopimeloyl-D-alanyl-D-alanine + UDP-N-acetyl-alpha-D-glucosamine = di-trans,octa-cis-undecaprenyl diphospho-[N-acetyl-alpha-D-glucosaminyl-(1-&gt;4)]-N-acetyl-alpha-D-muramoyl-L-alanyl-D-glutamyl-meso-2,6-diaminopimeloyl-D-alanyl-D-alanine + UDP + H(+). It functions in the pathway cell wall biogenesis; peptidoglycan biosynthesis. Functionally, cell wall formation. Catalyzes the transfer of a GlcNAc subunit on undecaprenyl-pyrophosphoryl-MurNAc-pentapeptide (lipid intermediate I) to form undecaprenyl-pyrophosphoryl-MurNAc-(pentapeptide)GlcNAc (lipid intermediate II). The sequence is that of UDP-N-acetylglucosamine--N-acetylmuramyl-(pentapeptide) pyrophosphoryl-undecaprenol N-acetylglucosamine transferase from Yersinia pestis bv. Antiqua (strain Antiqua).